The sequence spans 311 residues: Malate dehydrogenase (311 aa).

NAD(+)-binding positions include 7 to 13 (GAAGGIG) and D34. Residues R81 and R87 each contribute to the substrate site. NAD(+)-binding positions include N94 and 117–119 (ITN). The substrate site is built by N119 and R153. The active-site Proton acceptor is the H177. M227 serves as a coordination point for NAD(+).

Belongs to the LDH/MDH superfamily. MDH type 1 family. Homodimer.

It carries out the reaction (S)-malate + NAD(+) = oxaloacetate + NADH + H(+). Its function is as follows. Catalyzes the reversible oxidation of malate to oxaloacetate. The sequence is that of Malate dehydrogenase (mdh) from Haemophilus influenzae (strain ATCC 51907 / DSM 11121 / KW20 / Rd).